Reading from the N-terminus, the 110-residue chain is MHGPKPTVQEIVLELCPCNEIEPVDLVCHEQLGDSDDEIDEPDHAVNHHQHQLLARRDEQQRHTIQCTCCKCNNLLQLVVEASRENLRNVELLFMDSLNFVCPWCATETQ.

Positions 1-47 are E7 terminal domain; it reads MHGPKPTVQEIVLELCPCNEIEPVDLVCHEQLGDSDDEIDEPDHAVN. The LXCXE motif; interaction with host RB1 and TMEM173/STING motif lies at 26 to 30; the sequence is LVCHE. A zinc finger lies at 69 to 105; the sequence is CCKCNNLLQLVVEASRENLRNVELLFMDSLNFVCPWC. Positions 87–95 match the Nuclear export signal motif; it reads LRNVELLFM.

It belongs to the papillomaviridae E7 protein family. As to quaternary structure, homodimer. Homooligomer. Interacts with host RB1; this interaction induces dissociation of RB1-E2F1 complex thereby disrupting RB1 activity. Interacts with host EP300; this interaction represses EP300 transcriptional activity. Interacts with protein E2; this interaction inhibits E7 oncogenic activity. Interacts with host TMEM173/STING; this interaction impairs the ability of TMEM173/STING to sense cytosolic DNA and promote the production of type I interferon (IFN-alpha and IFN-beta). Highly phosphorylated.

The protein resides in the host cytoplasm. Its subcellular location is the host nucleus. Functionally, plays a role in viral genome replication by driving entry of quiescent cells into the cell cycle. Stimulation of progression from G1 to S phase allows the virus to efficiently use the cellular DNA replicating machinery to achieve viral genome replication. E7 protein has both transforming and trans-activating activities. Induces the disassembly of the E2F1 transcription factor from RB1, with subsequent transcriptional activation of E2F1-regulated S-phase genes. Interferes with host histone deacetylation mediated by HDAC1 and HDAC2, leading to transcription activation. Also plays a role in the inhibition of both antiviral and antiproliferative functions of host interferon alpha. Interaction with host TMEM173/STING impairs the ability of TMEM173/STING to sense cytosolic DNA and promote the production of type I interferon (IFN-alpha and IFN-beta). In Human papillomavirus type ME180, this protein is Protein E7.